The sequence spans 552 residues: Probable beta-glucosidase btgE (552 aa).

Residues M1–A18 form the signal peptide. The tract at residues E250–A291 is disordered. Residues P251 to T289 are compositionally biased toward low complexity. E392 (proton donor) is an active-site residue. The active-site Nucleophile is E488.

Belongs to the glycosyl hydrolase 17 family.

Its subcellular location is the secreted. The protein localises to the cell wall. It carries out the reaction Hydrolysis of terminal, non-reducing beta-D-glucosyl residues with release of beta-D-glucose.. It participates in glycan metabolism; cellulose degradation. In terms of biological role, beta-glucosidases are one of a number of cellulolytic enzymes involved in the degradation of cellulosic biomass. Catalyzes the last step releasing glucose from the inhibitory cellobiose. The protein is Probable beta-glucosidase btgE (btgE) of Neosartorya fischeri (strain ATCC 1020 / DSM 3700 / CBS 544.65 / FGSC A1164 / JCM 1740 / NRRL 181 / WB 181) (Aspergillus fischerianus).